The following is a 189-amino-acid chain: Thymidine kinase (189 aa).

ATP is bound by residues 9-16 and 85-88; these read GTMNSGKT and DESQ. E86 (proton acceptor) is an active-site residue. Zn(2+) is bound by residues C143, C146, C180, and H183.

The protein belongs to the thymidine kinase family. Homotetramer.

The protein localises to the cytoplasm. The catalysed reaction is thymidine + ATP = dTMP + ADP + H(+). The sequence is that of Thymidine kinase from Streptococcus pyogenes serotype M6 (strain ATCC BAA-946 / MGAS10394).